The primary structure comprises 88 residues: Cell division topological specificity factor (88 aa).

This sequence belongs to the MinE family.

In terms of biological role, prevents the cell division inhibition by proteins MinC and MinD at internal division sites while permitting inhibition at polar sites. This ensures cell division at the proper site by restricting the formation of a division septum at the midpoint of the long axis of the cell. This Carboxydothermus hydrogenoformans (strain ATCC BAA-161 / DSM 6008 / Z-2901) protein is Cell division topological specificity factor.